We begin with the raw amino-acid sequence, 74 residues long: Kappa-stichotoxin-Shd5a (74 aa).

The N-terminal stretch at 1-22 (MKFQVIAAVLLIAFCLCVVVTA) is a signal peptide. Positions 23–39 (RMELQDVEDVENGFQKR) are excised as a propeptide. One can recognise a ShKT domain in the interval 42–74 (CIDTIPQSRCTAFQCKHSMKYRLSFCRKTCGTC). Cystine bridges form between Cys-42–Cys-74, Cys-51–Cys-67, and Cys-56–Cys-71.

The protein belongs to the sea anemone type 1 potassium channel toxin family. Type 1a subfamily.

The protein localises to the secreted. Its subcellular location is the nematocyst. Inhibits voltage-gated potassium channels (Kv) with higher potency for Kv1.1/KCNA1 and Kv1.3/KCNA3. This Stichodactyla haddoni (Saddle carpet anemone) protein is Kappa-stichotoxin-Shd5a.